Consider the following 744-residue polypeptide: MLSRLGALLQEAVGAREPSIDLLQAFVEHWKGITHYYIESTDENTPAKKTDIPWRLKQMLDILVYEEKQQASSGEAGPCLEYLLQHKILETLCTLGKAEYPPGMRQQVFQFFSKVLSQVQHPLLHYLSVHRPVQKLLRLGGTVPGSLTEKEEVQFTSVLCSKIQQDPELLAYILEGKKIIGKKKTARESTAPPKDIAGYRDKDCPHSDALNRDPGLDKEHCGVPALSIHLPAETEGPENGPGESNLITSLLGLCKSKKSRLALKAQENILLLVSVASPAAATYLTQSTSCCMAIAEHLCQLYRSMPACLDPADIATLEGISWRLPSAPSDETAFPGKEALAAFLGWFDYCDHLITEAHTVVADALAKAVAEKLFVETLQPQLLHVSEQSILTSTALLTALLRQLRSPALLQEAMTFLLGTDQHPAAIEDSPHTLGTHLIMHCDHLSDEISIATLRLFEELLQKPHEQAIRSLVLQNLEGRLYVARGSPEPESYEDTLDLEEDPYFTDGFLDSGLQPSTKPPPAPATSSDGKTAVTEIVNSFLCLVPEEAKTSAFLEENGYDTYVHDAYGLFQECSSRVAHWGWPLGPAPLDSHEPERPFFEGRFLQVLFDRIARILDQPYSLNLQVTSVLSRLALFPHPHIHEYLLDPYISLAPGCRSLFSVLVRVIGDLMQRIQRVPQFSGKLLLVRKQLMGQVPGEHLDHQTLLQGVVVLEEFCKELAAIAFVKFPPHGPYLNFSPPPEGQV.

Disordered regions lie at residues 184-213 (KTARESTAPPKDIAGYRDKDCPHSDALNRD) and 510-530 (LDSGLQPSTKPPPAPATSSDG). The span at 197–213 (AGYRDKDCPHSDALNRD) shows a compositional bias: basic and acidic residues.

It belongs to the FHIP family. Expressed in colon.

Functionally, able to activate MAPK/ERK and TGFB signaling pathways. May regulate the activity of genes involved in intestinal barrier function and immunoprotective inflammation. May play a role in cell proliferation. This Mus musculus (Mouse) protein is FHF complex subunit HOOK-interacting protein 2B.